Here is a 302-residue protein sequence, read N- to C-terminus: Sulfate adenylyltransferase subunit 2 (302 aa).

This sequence belongs to the PAPS reductase family. CysD subfamily. Heterodimer composed of CysD, the smaller subunit, and CysN.

It catalyses the reaction sulfate + ATP + H(+) = adenosine 5'-phosphosulfate + diphosphate. It functions in the pathway sulfur metabolism; hydrogen sulfide biosynthesis; sulfite from sulfate: step 1/3. With CysN forms the ATP sulfurylase (ATPS) that catalyzes the adenylation of sulfate producing adenosine 5'-phosphosulfate (APS) and diphosphate, the first enzymatic step in sulfur assimilation pathway. APS synthesis involves the formation of a high-energy phosphoric-sulfuric acid anhydride bond driven by GTP hydrolysis by CysN coupled to ATP hydrolysis by CysD. This chain is Sulfate adenylyltransferase subunit 2, found in Escherichia coli O6:K15:H31 (strain 536 / UPEC).